Consider the following 282-residue polypeptide: Ribosomal RNA small subunit methyltransferase A (282 aa).

Positions 15, 17, 42, 64, 89, and 109 each coordinate S-adenosyl-L-methionine.

Belongs to the class I-like SAM-binding methyltransferase superfamily. rRNA adenine N(6)-methyltransferase family. RsmA subfamily.

It localises to the cytoplasm. The catalysed reaction is adenosine(1518)/adenosine(1519) in 16S rRNA + 4 S-adenosyl-L-methionine = N(6)-dimethyladenosine(1518)/N(6)-dimethyladenosine(1519) in 16S rRNA + 4 S-adenosyl-L-homocysteine + 4 H(+). Functionally, specifically dimethylates two adjacent adenosines (A1518 and A1519) in the loop of a conserved hairpin near the 3'-end of 16S rRNA in the 30S particle. May play a critical role in biogenesis of 30S subunits. The protein is Ribosomal RNA small subunit methyltransferase A of Prochlorococcus marinus (strain MIT 9211).